The chain runs to 267 residues: Cyclin-C (267 aa).

In terms of domain architecture, Cyclin N-terminal spans 48–151 (IQVLGEQLKL…LLENLDCCLI (104 aa)).

This sequence belongs to the cyclin family. Cyclin C subfamily. Component of the Cdk8 module of the Mediator complex, composed of CycC, Cdk8, kto and skd.

The protein resides in the nucleus. In terms of biological role, component of the Mediator complex, a coactivator involved in regulated gene transcription of nearly all RNA polymerase II-dependent genes. Mediator functions as a bridge to convey information from gene-specific regulatory proteins to the basal RNA polymerase II transcription machinery. Mediator is recruited to promoters by direct interactions with regulatory proteins and serves as a scaffold for the assembly of a functional preinitiation complex with RNA polymerase II and the general transcription factors. Binds to and activates cyclin-dependent kinase Cdk8 that phosphorylates the CTD (C-terminal domain) of the large subunit of RNA polymerase II (RNAp II), which may inhibit the formation of a transcription initiation complex. Required for leg and eye development and macrochaete specification or differentiation. This Drosophila melanogaster (Fruit fly) protein is Cyclin-C (CycC).